Here is a 306-residue protein sequence, read N- to C-terminus: F-box/LRR-repeat protein At3g26922 (306 aa).

The F-box domain maps to 13–73 (EDRISDLPEA…QSEDETYSEI (61 aa)). LRR repeat units lie at residues 67-93 (DETY…HLGF), 98-122 (CRSV…VLHV), 138-170 (CETL…RLEN), 171-196 (VDYK…VVYR), 215-243 (LTIY…KIDG), and 263-288 (IMNV…SLAL).

In Arabidopsis thaliana (Mouse-ear cress), this protein is F-box/LRR-repeat protein At3g26922.